Consider the following 400-residue polypeptide: Phosphoglycerate kinase (400 aa).

Residues 21-23 (DLN), Arg36, 59-62 (HLGR), Arg116, and Arg149 each bind substrate. ATP contacts are provided by residues Lys200, Glu317, and 343–346 (GGDT).

Belongs to the phosphoglycerate kinase family. In terms of assembly, monomer.

Its subcellular location is the cytoplasm. The enzyme catalyses (2R)-3-phosphoglycerate + ATP = (2R)-3-phospho-glyceroyl phosphate + ADP. It functions in the pathway carbohydrate degradation; glycolysis; pyruvate from D-glyceraldehyde 3-phosphate: step 2/5. This Blochmanniella floridana protein is Phosphoglycerate kinase.